The sequence spans 148 residues: MVKARKEPVNAVQVFGRKKTATAVAYCKRGKGLLRVNGRPLDQIEPKVLQYKLQEPLLLLGKEKFAGVDIRIRVSGGGHVAQIYAIRQAISKALVSFYQKYVDEASRKELKDILTQYDRTLLVADPRRCEPKKFGGPGARARYQKSYR.

Belongs to the universal ribosomal protein uS9 family.

This Aedes aegypti (Yellowfever mosquito) protein is Small ribosomal subunit protein uS9 (RpS16).